Reading from the N-terminus, the 317-residue chain is MHFLEFEKPIADLEGKIEELRTLTDGGDINIADEVKKLQEKVDKLLRSTYAKLTPAQKVQVARHPERPHCLDYIQRLITDFTPLAGDRLFAEDRAIVGGLGRFRGRSVVVIGQERGHDTESRVRHNFGMAKPEGYRKAQRLLQLADRFRLPVVTLVDTAGAFPGVSAEERGQAEAIARSIETCLRLKVPLVSAVIGEGGSGGAIAIATADRVLMLEHAIYSVISPEGCASILWRSAANASDAAQALRLTAQDLKELGVIDRVVMEPVGGAHRRREEMIATLGNAIEDALDDLREQDGATLRLNRRQKFLDIGQKGLG.

A CoA carboxyltransferase C-terminal domain is found at 37–291; sequence KLQEKVDKLL…GNAIEDALDD (255 aa).

The protein belongs to the AccA family. Acetyl-CoA carboxylase is a heterohexamer composed of biotin carboxyl carrier protein (AccB), biotin carboxylase (AccC) and two subunits each of ACCase subunit alpha (AccA) and ACCase subunit beta (AccD).

The protein localises to the cytoplasm. The enzyme catalyses N(6)-carboxybiotinyl-L-lysyl-[protein] + acetyl-CoA = N(6)-biotinyl-L-lysyl-[protein] + malonyl-CoA. The protein operates within lipid metabolism; malonyl-CoA biosynthesis; malonyl-CoA from acetyl-CoA: step 1/1. In terms of biological role, component of the acetyl coenzyme A carboxylase (ACC) complex. First, biotin carboxylase catalyzes the carboxylation of biotin on its carrier protein (BCCP) and then the CO(2) group is transferred by the carboxyltransferase to acetyl-CoA to form malonyl-CoA. This Rhodospirillum centenum (strain ATCC 51521 / SW) protein is Acetyl-coenzyme A carboxylase carboxyl transferase subunit alpha.